The following is a 1088-amino-acid chain: RNA-directed RNA polymerase (1088 aa).

Residues 501-687 (LSYGDVTRFL…AKRYIAGGKI (187 aa)) enclose the RdRp catalytic domain.

The protein belongs to the reoviridae RNA-directed RNA polymerase family. As to quaternary structure, interacts with VP3 (Potential). Interacts with VP2; this interaction activates VP1. Interacts with NSP5; this interaction is probably necessary for the formation of functional virus factories. Interacts with NSP2; this interaction is weak. The cofactor is Mg(2+).

Its subcellular location is the virion. The catalysed reaction is RNA(n) + a ribonucleoside 5'-triphosphate = RNA(n+1) + diphosphate. Functionally, RNA-directed RNA polymerase that is involved in both transcription and genome replication. Together with VP3 capping enzyme, forms an enzyme complex positioned near the channels situated at each of the five-fold vertices of the core. Following infection, the outermost layer of the virus is lost, leaving a double-layered particle (DLP) made up of the core and VP6 shell. VP1 then catalyzes the transcription of fully conservative plus-strand genomic RNAs that are extruded through the DLP's channels into the cytoplasm where they function as mRNAs for translation of viral proteins. One copy of each of the viral (+)RNAs is also recruited during core assembly, together with newly synthesized polymerase complexes and VP2. The polymerase of these novo-formed particles catalyzes the synthesis of complementary minus-strands leading to dsRNA formation. To do so, the polymerase specifically recognizes and binds 4 bases 5'-UGUG-3' in the conserved 3'-sequence of plus-strand RNA templates. VP2 presumably activates the autoinhibited VP1-RNA complex to coordinate packaging and genome replication. Once dsRNA synthesis is complete, the polymerase switches to the transcriptional mode, thus providing secondary transcription. The sequence is that of RNA-directed RNA polymerase from Homo sapiens (Human).